We begin with the raw amino-acid sequence, 447 residues long: Methylenetetrahydrofolate--tRNA-(uracil-5-)-methyltransferase TrmFO (447 aa).

Gly13–Gly18 is an FAD binding site.

The protein belongs to the MnmG family. TrmFO subfamily. FAD serves as cofactor.

It localises to the cytoplasm. The catalysed reaction is uridine(54) in tRNA + (6R)-5,10-methylene-5,6,7,8-tetrahydrofolate + NADH + H(+) = 5-methyluridine(54) in tRNA + (6S)-5,6,7,8-tetrahydrofolate + NAD(+). The enzyme catalyses uridine(54) in tRNA + (6R)-5,10-methylene-5,6,7,8-tetrahydrofolate + NADPH + H(+) = 5-methyluridine(54) in tRNA + (6S)-5,6,7,8-tetrahydrofolate + NADP(+). Catalyzes the folate-dependent formation of 5-methyl-uridine at position 54 (M-5-U54) in all tRNAs. This Streptococcus thermophilus (strain ATCC BAA-250 / LMG 18311) protein is Methylenetetrahydrofolate--tRNA-(uracil-5-)-methyltransferase TrmFO.